Consider the following 647-residue polypeptide: Threonine--tRNA ligase (647 aa).

One can recognise a TGS domain in the interval 1–61 (MINITFPDGA…TEDGSIEIVT (61 aa)). The tract at residues 242–540 (DHRKLGKELD…LIENYKGAFP (299 aa)) is catalytic. Residues Cys336, His387, and His517 each coordinate Zn(2+).

Belongs to the class-II aminoacyl-tRNA synthetase family. In terms of assembly, homodimer. Zn(2+) is required as a cofactor.

It is found in the cytoplasm. The catalysed reaction is tRNA(Thr) + L-threonine + ATP = L-threonyl-tRNA(Thr) + AMP + diphosphate + H(+). In terms of biological role, catalyzes the attachment of threonine to tRNA(Thr) in a two-step reaction: L-threonine is first activated by ATP to form Thr-AMP and then transferred to the acceptor end of tRNA(Thr). Also edits incorrectly charged L-seryl-tRNA(Thr). The protein is Threonine--tRNA ligase of Streptococcus pneumoniae (strain P1031).